We begin with the raw amino-acid sequence, 622 residues long: Polyprotein p69 (622 aa).

The region spanning 1-248 is the Peptidase C7 domain; the sequence is MSCLRKPSQS…AARDPLARIG (248 aa). Catalysis depends on for papain-like protease p29 activity residues C162 and H215.

Post-translationally, autocatalytically processed.

P40 protein is involved in reduction of conidiation of the host. Not necessary for replication. Also involved in reduction of orange pigmentation of the host. Its function is as follows. Cysteine protease of the peptidase family C7 that contributes to hypovirulence-associated traits like the reduction in conidiation and laccase activity, but not to virulence attenuation. Acts as a suppressor of RNA-mediated gene silencing, also known as post-transcriptional gene silencing (PTGS), a mechanism of viral defense that limits the accumulation of viral RNAs. Enhances viral dsRNA accumulation and virus transmission. Also involved in the reduction in orange pigmentation of the host, an effect independent of the intrinsic protease activity. This Cryphonectria hypovirus 1 (strain Euro7) (CHV-1/Euro7) protein is Polyprotein p69.